Consider the following 825-residue polypeptide: Ubiquitin carboxyl-terminal hydrolase 16 (825 aa).

A disordered region spans residues 1 to 20 (MGKKRTKGRSAPDTVASESA). The UBP-type zinc-finger motif lies at 22 to 141 (PVCRHLRKGL…QVVDYVRKQA (120 aa)). 12 residues coordinate Zn(2+): C24, H26, C48, C51, C73, C76, C81, H89, H93, H102, C115, and C118. K139 participates in a covalent cross-link: Glycyl lysine isopeptide (Lys-Gly) (interchain with G-Cter in SUMO2). The segment covering 164–180 (EKESKNEQEREKSENLA) has biased composition (basic and acidic residues). The interval 164–184 (EKESKNEQEREKSENLAKETI) is disordered. A Phosphoserine modification is found at S188. One can recognise a USP domain in the interval 195 to 824 (KGLSNLGNTC…QAYLLFYERI (630 aa)). The Nucleophile role is filled by C204. Over residues 393 to 407 (SGKKSINDKNVKMTM) the composition is skewed to basic and acidic residues. The tract at residues 393-456 (SGKKSINDKN…KQAKNQRRQQ (64 aa)) is disordered. Over residues 408-419 (EEEDKDSEEEKD) the composition is skewed to acidic residues. S414 carries the post-translational modification Phosphoserine. Residues 436 to 456 (HLQKKAKKQAKKQAKNQRRQQ) show a composition bias toward basic residues. Phosphoserine is present on residues S520 and S531. The Proton acceptor role is filled by H759.

Belongs to the peptidase C19 family. USP16 subfamily. In terms of assembly, homotetramer. Associates with late pre-40S ribosomes. Interacts with CEP78; promoting deubiquitination of tektins. Phosphorylated at the onset of mitosis and dephosphorylated during the metaphase/anaphase transition. Phosphorylation by AURKB enhances the deubiquitinase activity.

Its subcellular location is the nucleus. The protein localises to the cytoplasm. The catalysed reaction is Thiol-dependent hydrolysis of ester, thioester, amide, peptide and isopeptide bonds formed by the C-terminal Gly of ubiquitin (a 76-residue protein attached to proteins as an intracellular targeting signal).. Functionally, specifically deubiquitinates 'Lys-120' of histone H2A (H2AK119Ub), a specific tag for epigenetic transcriptional repression, thereby acting as a coactivator. Deubiquitination of histone H2A is a prerequisite for subsequent phosphorylation at 'Ser-11' of histone H3 (H3S10ph), and is required for chromosome segregation when cells enter into mitosis. In resting B- and T-lymphocytes, phosphorylation by AURKB leads to enhance its activity, thereby maintaining transcription in resting lymphocytes. Regulates Hox gene expression via histone H2A deubiquitination. Prefers nucleosomal substrates. Does not deubiquitinate histone H2B. Also deubiquitinates non-histone proteins, such as ribosomal protein RPS27A: deubiquitination of monoubiquitinated RPS27A promotes maturation of the 40S ribosomal subunit. Also mediates deubiquitination of tektin proteins (TEKT1, TEKT2, TEK3, TEKT4 and TEKT5), promoting their stability. This is Ubiquitin carboxyl-terminal hydrolase 16 (Usp16) from Mus musculus (Mouse).